The sequence spans 864 residues: DNA mismatch repair protein MutS (864 aa).

613 to 620 (GPNMGGKS) provides a ligand contact to ATP.

Belongs to the DNA mismatch repair MutS family.

Functionally, this protein is involved in the repair of mismatches in DNA. It is possible that it carries out the mismatch recognition step. This protein has a weak ATPase activity. In Actinobacillus pleuropneumoniae serotype 7 (strain AP76), this protein is DNA mismatch repair protein MutS.